The chain runs to 406 residues: Multifunctional CCA protein (406 aa).

ATP contacts are provided by glycine 8 and arginine 11. CTP-binding residues include glycine 8 and arginine 11. Mg(2+) contacts are provided by aspartate 21 and aspartate 23. Arginine 91, arginine 137, and arginine 140 together coordinate ATP. 3 residues coordinate CTP: arginine 91, arginine 137, and arginine 140. An HD domain is found at 228 to 329 (TGIHTLMVAQ…IKILNKFDVW (102 aa)).

The protein belongs to the tRNA nucleotidyltransferase/poly(A) polymerase family. Bacterial CCA-adding enzyme type 1 subfamily. Monomer. Can also form homodimers and oligomers. Requires Mg(2+) as cofactor. It depends on Ni(2+) as a cofactor.

It catalyses the reaction a tRNA precursor + 2 CTP + ATP = a tRNA with a 3' CCA end + 3 diphosphate. The enzyme catalyses a tRNA with a 3' CCA end + 2 CTP + ATP = a tRNA with a 3' CCACCA end + 3 diphosphate. Catalyzes the addition and repair of the essential 3'-terminal CCA sequence in tRNAs without using a nucleic acid template. Adds these three nucleotides in the order of C, C, and A to the tRNA nucleotide-73, using CTP and ATP as substrates and producing inorganic pyrophosphate. tRNA 3'-terminal CCA addition is required both for tRNA processing and repair. Also involved in tRNA surveillance by mediating tandem CCA addition to generate a CCACCA at the 3' terminus of unstable tRNAs. While stable tRNAs receive only 3'-terminal CCA, unstable tRNAs are marked with CCACCA and rapidly degraded. This chain is Multifunctional CCA protein, found in Vibrio campbellii (strain ATCC BAA-1116).